The primary structure comprises 1118 residues: Sodium-driven chloride bicarbonate exchanger (1118 aa).

4 disordered regions span residues 1–23 (MEIKDQGAQMEPLLPTRNDEEAV), 58–96 (GRKSHRRHRHRGHKHRKRDRERDSGLEDGRESPSFDTPS), 245–312 (KQSE…PPHQ), and 457–476 (NGTAAHGEAEPHGGHSGPEL). Topologically, residues 1-509 (MEIKDQGAQM…DFRDAFSLQC (509 aa)) are cytoplasmic. Basic residues predominate over residues 59–76 (RKSHRRHRHRGHKHRKRD). The segment covering 77-90 (RERDSGLEDGRESP) has biased composition (basic and acidic residues). Ser-89 is modified (phosphoserine). At Thr-94 the chain carries Phosphothreonine. The segment covering 248 to 264 (EPNSMDKNAGQVVSPQS) has biased composition (polar residues). Ser-276 is modified (phosphoserine). A helical transmembrane segment spans residues 510-530 (LASFLFLYCACMSPVITFGGL). At 531-538 (LGEATEGR) the chain is on the extracellular side. The chain crosses the membrane as a helical span at residues 539-559 (ISAIESLFGASMTGIAYSLFG). Residues 560 to 562 (GQP) lie on the Cytoplasmic side of the membrane. A helical membrane pass occupies residues 563–583 (LTILGSTGPVLVFEKILFKFC). The Extracellular segment spans residues 584–596 (KEYGLSYLSLRAS). The helical transmembrane segment at 597–617 (IGLWTATLCIILVATDASSLV) threads the bilayer. Residues 618–626 (CYITRFTEE) lie on the Cytoplasmic side of the membrane. Residues 627–647 (AFASLICIIFIYEALEKLFEL) traverse the membrane as a helical segment. Over 648-720 (SEAYPINMHN…VGRACGHDHP (73 aa)) the chain is Extracellular. N-linked (GlcNAc...) asparagine glycans are attached at residues Asn-674, Asn-677, Asn-687, and Asn-697. The helical transmembrane segment at 721–741 (YVPDVLFWSVILFFSTVTLSA) threads the bilayer. Over 742–762 (TLKQFKTSRYFPTKVRSIVSD) the chain is Cytoplasmic. A helical membrane pass occupies residues 763-783 (FAVFLTILCMVLIDYAIGIPS). Residues 784–809 (PKLQVPSVFKPTRDDRGWFVTPLGPN) lie on the Extracellular side of the membrane. Residues 810–830 (PWWTVIAAIIPALLCTILIFM) traverse the membrane as a helical segment. Residues 831–855 (DQQITAVIINRKEHKLKKGCGYHLD) are Cytoplasmic-facing. A helical transmembrane segment spans residues 856–876 (LLMVAVMLGVCSIMGLPWFVA). The Extracellular portion of the chain corresponds to 877-912 (ATVLSITHVNSLKLESECSAPGEQPKFLGIREQRVT). A helical membrane pass occupies residues 913–933 (GLMIFILMGSSVFMTSILKFI). Residues 934–935 (PM) are Cytoplasmic-facing. A helical transmembrane segment spans residues 936 to 956 (PVLYGVFLYMGASSLKGIQFF). The Extracellular segment spans residues 957-998 (DRIKLFWMPAKHQPDFIYLRHVPLRKVHLFTIIQMSCLGLLW). The helical transmembrane segment at 999-1019 (IIKVSRAAIVFPMMVLALVFV) threads the bilayer. The Cytoplasmic segment spans residues 1020 to 1118 (RKLMDLLFTK…SSFPSKSSPS (99 aa)). Ser-1057 and Ser-1085 each carry phosphoserine.

This sequence belongs to the anion exchanger (TC 2.A.31) family. Predominantly expressed in the brain.

Its subcellular location is the basolateral cell membrane. The protein resides in the apical cell membrane. The protein localises to the cell projection. It is found in the dendrite. It localises to the axon. Its subcellular location is the perikaryon. The protein resides in the presynapse. The protein localises to the postsynapse. It carries out the reaction 2 hydrogencarbonate(out) + chloride(in) + Na(+)(out) = 2 hydrogencarbonate(in) + chloride(out) + Na(+)(in). Sodium/bicarbonate cotransporter which plays an important role in regulating intracellular pH. Has been shown to act as a sodium/bicarbonate cotransporter in exchange for intracellular chloride. Has also been shown to act as a sodium/biocarbonate cotransporter which does not couple net influx of bicarbonate to net efflux of chloride, with the observed chloride efflux being due to chloride self-exchange. Controls neuronal pH and may contribute to the secretion of cerebrospinal fluid. Acting on presynaptic intracellular pH, it promotes GABA release, reduces the excitability of CA1 pyramidal neurons, and modulates short-term synaptic plasticity. Required in retinal cells to maintain normal pH which is necessary for normal vision. In the kidney, likely to mediate bicarbonate reclamation in the apical membrane of the proximal tubules. This Homo sapiens (Human) protein is Sodium-driven chloride bicarbonate exchanger.